Consider the following 1009-residue polypeptide: Protein-tyrosine kinase 2-beta (1009 aa).

The FERM domain maps to 39 to 359; the sequence is RILKVCFYSN…GYCRLQGEHQ (321 aa). Phosphoserine is present on residues Ser-361, Ser-375, and Ser-399. Phosphotyrosine; by autocatalysis is present on Tyr-402. A Protein kinase domain is found at 425–683; the sequence is VVLNRILGEG…ELVCSLSDVY (259 aa). ATP-binding positions include 431–439, Lys-457, and 503–509; these read LGEGFFGEV and ELYPYGE. The active-site Proton acceptor is the Asp-549. Tyr-579 bears the Phosphotyrosine mark. Tyr-580 is subject to Phosphotyrosine; by SRC, FYN and LCK. The disordered stretch occupies residues 701–725; it reads TPKILEPTAFQEPPPKPSRPKYRPP. A compositionally biased stretch (pro residues) spans 712–725; the sequence is EPPPKPSRPKYRPP. Tyr-722 bears the Phosphotyrosine mark. Phosphoserine is present on Ser-762. Phosphothreonine is present on Thr-765. The tract at residues 801–1009 is interaction with TGFB1I1; sequence KVKMRQILDK…LANLAHPPAE (209 aa). Tyr-819 and Tyr-834 each carry phosphotyrosine. Ser-839 is modified (phosphoserine). Phosphothreonine is present on Thr-842. A Phosphotyrosine modification is found at Tyr-849. Ser-866 carries the phosphoserine modification. Residues 868 to 1009 are focal adhesion targeting (FAT); sequence QPTANLDRTD…LANLAHPPAE (142 aa). Tyr-881 bears the Phosphotyrosine; by SRC mark.

This sequence belongs to the protein kinase superfamily. Tyr protein kinase family. FAK subfamily. As to quaternary structure, homodimer, or homooligomer. Interacts with SIRPA and SH2D3C. Interacts with ARHGAP10. Interacts with DLG4. Interacts with KCNA2. Interacts with NPHP1, ASAP1, ASAP2, ARHGAP26, SKAP2 and TGFB1I1. The Tyr-402 phosphorylated form interacts with SRC (via SH2 domain) and SRC family members. Forms a signaling complex with EPHA1, LCK and phosphatidylinositol 3-kinase; upon activation by EFNA1. Interacts with GRB2 (via SH2 domain). Interacts with P53/TP53 and MDM2. Interacts with MYLK. Interacts with BCAR1. Interacts with PDPK1. Interacts (hypophosphorylated) with PXN. Interacts with RB1CC1. Interacts with RHOU. Interacts with VAV1. Interacts with LPXN and PTPN12. Post-translationally, phosphorylated on tyrosine residues in response to various stimuli that elevate the intracellular calcium concentration; this activation is indirect and may be mediated by production of reactive oxygen species (ROS). Tyr-402 is the major autophosphorylation site, but other kinases can also phosphorylate Tyr-402. Autophosphorylation occurs in trans, i.e. one subunit of the dimeric receptor phosphorylates tyrosine residues on the other subunit. Phosphorylation at Tyr-402 promotes interaction with SRC and SRC family members, leading to phosphorylation at Tyr-579; Tyr-580 and Tyr-881. Phosphorylation at Tyr-881 is important for interaction with GRB2. Phosphorylated on tyrosine residues upon activation of FGR and PKC. Recruitment by NPHP1 to cell matrix adhesions initiates Tyr-402 phosphorylation. In monocytes, adherence to substrata is required for tyrosine phosphorylation and kinase activation. Angiotensin II, thapsigargin and L-alpha-lysophosphatidic acid (LPA) also induce autophosphorylation and increase kinase activity. Phosphorylation by MYLK promotes ITGB2 activation and is thus essential to trigger neutrophil transmigration during lung injury. Dephosphorylated by PTPN12. As to expression, most abundant in the brain, with highest levels in amygdala and hippocampus. Low levels in kidney (at protein level). Also expressed in spleen and lymphocytes.

Its subcellular location is the cytoplasm. It is found in the perinuclear region. The protein localises to the cell membrane. The protein resides in the cell junction. It localises to the focal adhesion. Its subcellular location is the cell projection. It is found in the lamellipodium. The protein localises to the cell cortex. The protein resides in the nucleus. The catalysed reaction is L-tyrosyl-[protein] + ATP = O-phospho-L-tyrosyl-[protein] + ADP + H(+). Activated in response to stimuli that lead to increased intracellular Ca(2+) levels; this activation is indirect and may be mediated by calcium-mediated production of reactive oxygen species (ROS). Activated by autophosphorylation at Tyr-402; this creates a binding site for SRC family kinases and leads to phosphorylation at additional tyrosine residues. Phosphorylation at Tyr-402, Tyr-579 and Tyr-580 is required for optimal kinase activity. Inhibited by PF-562,271, BIRB796, PF-4618433 and by PF-431396, PF-2318841 and their derivatives. Inhibited by sulfoximine-substituted trifluoromethylpyrimidines. Inhibited by 4-amino and 5-aryl substituted pyridinone compounds. Functionally, non-receptor protein-tyrosine kinase that regulates reorganization of the actin cytoskeleton, cell polarization, cell migration, adhesion, spreading and bone remodeling. Plays a role in the regulation of the humoral immune response, and is required for normal levels of marginal B-cells in the spleen and normal migration of splenic B-cells. Required for normal macrophage polarization and migration towards sites of inflammation. Regulates cytoskeleton rearrangement and cell spreading in T-cells, and contributes to the regulation of T-cell responses. Promotes osteoclastic bone resorption; this requires both PTK2B/PYK2 and SRC. May inhibit differentiation and activity of osteoprogenitor cells. Functions in signaling downstream of integrin and collagen receptors, immune receptors, G-protein coupled receptors (GPCR), cytokine, chemokine and growth factor receptors, and mediates responses to cellular stress. Forms multisubunit signaling complexes with SRC and SRC family members upon activation; this leads to the phosphorylation of additional tyrosine residues, creating binding sites for scaffold proteins, effectors and substrates. Regulates numerous signaling pathways. Promotes activation of phosphatidylinositol 3-kinase and of the AKT1 signaling cascade. Promotes activation of NOS3. Regulates production of the cellular messenger cGMP. Promotes activation of the MAP kinase signaling cascade, including activation of MAPK1/ERK2, MAPK3/ERK1 and MAPK8/JNK1. Promotes activation of Rho family GTPases, such as RHOA and RAC1. Recruits the ubiquitin ligase MDM2 to P53/TP53 in the nucleus, and thereby regulates P53/TP53 activity, P53/TP53 ubiquitination and proteasomal degradation. Acts as a scaffold, binding to both PDPK1 and SRC, thereby allowing SRC to phosphorylate PDPK1 at 'Tyr-9, 'Tyr-373', and 'Tyr-376'. Promotes phosphorylation of NMDA receptors by SRC family members, and thereby contributes to the regulation of NMDA receptor ion channel activity and intracellular Ca(2+) levels. May also regulate potassium ion transport by phosphorylation of potassium channel subunits. Phosphorylates SRC; this increases SRC kinase activity. Phosphorylates ASAP1, NPHP1, KCNA2 and SHC1. Promotes phosphorylation of ASAP2, RHOU and PXN; this requires both SRC and PTK2/PYK2. This chain is Protein-tyrosine kinase 2-beta (PTK2B), found in Homo sapiens (Human).